A 104-amino-acid polypeptide reads, in one-letter code: Replication restart protein PriB (104 aa).

Positions 1-101 (MTNRLELSGV…LHADHIEIIC (101 aa)) constitute an SSB domain.

This sequence belongs to the PriB family. In terms of assembly, homodimer. Interacts with PriA and DnaT. Component of the replication restart primosome. Primosome assembly occurs via a 'hand-off' mechanism. PriA binds to replication forks, subsequently PriB then DnaT bind; DnaT then displaces ssDNA to generate the helicase loading substrate.

Involved in the restart of stalled replication forks, which reloads the replicative helicase on sites other than the origin of replication; the PriA-PriB pathway is the major replication restart pathway. During primosome assembly it facilitates complex formation between PriA and DnaT on DNA; stabilizes PriA on DNA. Stimulates the DNA unwinding activity of PriA helicase. The sequence is that of Replication restart protein PriB from Photobacterium profundum (strain SS9).